Consider the following 67-residue polypeptide: Pepsin B (67 aa).

The propeptide at 1 to 43 is activation peptide; sequence MERIILRKGKSIREAMEEQGVLEKFLKNRPKIDPAAKYHFNND.

It belongs to the peptidase A1 family.

It localises to the secreted. It catalyses the reaction Degradation of gelatin, little activity on hemoglobin. Specificity on B chain of insulin more restricted than that of pepsin A. Does not cleave 1-Phe-|-Val-2, 4-Gln-|-His-5 or 23-Gly-|-Phe-24.. The sequence is that of Pepsin B (PGB) from Sus scrofa (Pig).